The following is a 454-amino-acid chain: DNA-binding protein (454 aa).

The segment at 1–41 is disordered; it reads MSHKKVVAISESSSDEEVPVAPPTAPPKKRQRKAVEEPRGH. At Y129 the chain carries Phosphotyrosine; by host. C213 and H215 together coordinate Zn(2+). Residues 226 to 260 form a flexible loop region; it reads VEMDVNSENAQRALKENPEKTKIVSNRWGRNVVQF. Residues C268, C284, C325, C327, C378, and C394 each contribute to the Zn(2+) site. The C-terminal arm, DBP binding stretch occupies residues 440-454; the sequence is TILPQGQHDDDLVLF.

This sequence belongs to the adenoviridae E2A DNA-binding protein family. Homomultimerizes on viral ssDNA bound to pTP. Forms a initiation complex with viral polymerase, pTP and hosts NFIA and POU2F1/OCT1. Interacts with host SRCAP.

The protein resides in the host nucleus. Functionally, plays a role in the elongation phase of viral strand displacement replication by unwinding the template in an ATP-independent fashion, employing its capacity to form multimers. Also enhances the rate of initiation. Released from template upon second strand synthesis. Assembles in complex with viral pTP, viral pol, host NFIA and host POU2F1/OCT1 on viral origin of replication. Covers the whole ssDNA genome during synthesis. The complementary strand synthesis induces its relese from DNA template. May inhibit cellular transcription mediated by the interaction between host SRCAP and CBP. This chain is DNA-binding protein, found in Canine adenovirus serotype 1 (strain CLL) (CAdV-1).